Consider the following 303-residue polypeptide: Phosphoglycerate mutase 3 (303 aa).

Substrate is bound by residues 13 to 20 (RHGQSELN), 26 to 27 (CG), arginine 70, 120 to 123 (ERHY), lysine 131, and 147 to 148 (RR). The active-site Tele-phosphohistidine intermediate is the histidine 14. Glutamate 120 serves as the catalytic Proton donor/acceptor. The segment at 168–198 (NDQGSSTGYDFKEPNRHLKYGPEEKANERLP) is disordered. Residues 177–198 (DFKEPNRHLKYGPEEKANERLP) show a composition bias toward basic and acidic residues. Substrate is bound at residue 236–237 (GS).

It belongs to the phosphoglycerate mutase family. BPG-dependent PGAM subfamily.

The enzyme catalyses (2R)-2-phosphoglycerate = (2R)-3-phosphoglycerate. It functions in the pathway carbohydrate degradation; glycolysis; pyruvate from D-glyceraldehyde 3-phosphate: step 3/5. In terms of biological role, could be non-functional. The sequence is that of Phosphoglycerate mutase 3 (GPM3) from Saccharomyces cerevisiae (strain ATCC 204508 / S288c) (Baker's yeast).